The sequence spans 125 residues: Large ribosomal subunit protein bL12 (125 aa).

The protein belongs to the bacterial ribosomal protein bL12 family. Homodimer. Part of the ribosomal stalk of the 50S ribosomal subunit. Forms a multimeric L10(L12)X complex, where L10 forms an elongated spine to which 2 to 4 L12 dimers bind in a sequential fashion. Binds GTP-bound translation factors.

In terms of biological role, forms part of the ribosomal stalk which helps the ribosome interact with GTP-bound translation factors. Is thus essential for accurate translation. This Francisella tularensis subsp. holarctica (strain FTNF002-00 / FTA) protein is Large ribosomal subunit protein bL12.